We begin with the raw amino-acid sequence, 275 residues long: Uroporphyrinogen-III synthase (275 aa).

Belongs to the uroporphyrinogen-III synthase family.

It carries out the reaction hydroxymethylbilane = uroporphyrinogen III + H2O. It functions in the pathway porphyrin-containing compound metabolism; protoporphyrin-IX biosynthesis; coproporphyrinogen-III from 5-aminolevulinate: step 3/4. Functionally, catalyzes cyclization of the linear tetrapyrrole, hydroxymethylbilane, to the macrocyclic uroporphyrinogen III, the fourth step in the heme biosynthetic pathway. The chain is Uroporphyrinogen-III synthase from Saccharomyces cerevisiae (strain ATCC 204508 / S288c) (Baker's yeast).